The chain runs to 609 residues: UvrABC system protein C (609 aa).

Residues E22–V100 enclose the GIY-YIG domain. One can recognise a UVR domain in the interval Q214–Y249.

Belongs to the UvrC family. As to quaternary structure, interacts with UvrB in an incision complex.

The protein resides in the cytoplasm. Its function is as follows. The UvrABC repair system catalyzes the recognition and processing of DNA lesions. UvrC both incises the 5' and 3' sides of the lesion. The N-terminal half is responsible for the 3' incision and the C-terminal half is responsible for the 5' incision. The protein is UvrABC system protein C of Bacteroides thetaiotaomicron (strain ATCC 29148 / DSM 2079 / JCM 5827 / CCUG 10774 / NCTC 10582 / VPI-5482 / E50).